The primary structure comprises 734 residues: Photosystem I P700 chlorophyll a apoprotein A2 (734 aa).

The next 8 helical transmembrane spans lie at 46 to 69 (IFAS…FHVA), 135 to 158 (LYTG…LHLQ), 175 to 199 (LNHH…HVAI), 273 to 291 (MAHH…GHMY), 330 to 353 (IHFQ…QHMY), 369 to 395 (AALY…IFFI), 417 to 439 (AIIS…LYVH), and 517 to 535 (FLVH…LILV). Residues cysteine 559 and cysteine 568 each contribute to the [4Fe-4S] cluster site. 2 helical membrane passes run 575-596 (AFYL…YWHW) and 643-665 (LSVW…MFLI). Chlorophyll a contacts are provided by histidine 654, methionine 662, and tyrosine 670. Residue tryptophan 671 coordinates phylloquinone. A helical transmembrane segment spans residues 707 to 727 (LVGLAHFSVGYIFTYAAFLIA).

It belongs to the PsaA/PsaB family. The PsaA/B heterodimer binds the P700 chlorophyll special pair and subsequent electron acceptors. PSI consists of a core antenna complex that captures photons, and an electron transfer chain that converts photonic excitation into a charge separation. The eukaryotic PSI reaction center is composed of at least 11 subunits. P700 is a chlorophyll a/chlorophyll a' dimer, A0 is one or more chlorophyll a, A1 is one or both phylloquinones and FX is a shared 4Fe-4S iron-sulfur center. is required as a cofactor.

Its subcellular location is the plastid. It localises to the chloroplast thylakoid membrane. The enzyme catalyses reduced [plastocyanin] + hnu + oxidized [2Fe-2S]-[ferredoxin] = oxidized [plastocyanin] + reduced [2Fe-2S]-[ferredoxin]. PsaA and PsaB bind P700, the primary electron donor of photosystem I (PSI), as well as the electron acceptors A0, A1 and FX. PSI is a plastocyanin-ferredoxin oxidoreductase, converting photonic excitation into a charge separation, which transfers an electron from the donor P700 chlorophyll pair to the spectroscopically characterized acceptors A0, A1, FX, FA and FB in turn. Oxidized P700 is reduced on the lumenal side of the thylakoid membrane by plastocyanin. This is Photosystem I P700 chlorophyll a apoprotein A2 from Triticum aestivum (Wheat).